We begin with the raw amino-acid sequence, 153 residues long: Catabolic 3-dehydroquinase (153 aa).

Tyrosine 24 serves as the catalytic Proton acceptor. Asparagine 75, histidine 81, and aspartate 88 together coordinate substrate. Histidine 101 functions as the Proton donor in the catalytic mechanism. Substrate contacts are provided by residues 102-103 (VS) and arginine 112.

It belongs to the type-II 3-dehydroquinase family. As to quaternary structure, homododecamer. Adopts a ring-like structure, composed of an arrangement of two hexameric rings stacked on top of one another.

It carries out the reaction 3-dehydroquinate = 3-dehydroshikimate + H2O. It participates in aromatic compound metabolism; 3,4-dihydroxybenzoate biosynthesis; 3,4-dihydroxybenzoate from 3-dehydroquinate: step 1/2. Functionally, is involved in the catabolism of quinate. Allows the utilization of quinate as carbon source via the beta-ketoadipate pathway. This Emericella nidulans (strain FGSC A4 / ATCC 38163 / CBS 112.46 / NRRL 194 / M139) (Aspergillus nidulans) protein is Catabolic 3-dehydroquinase.